Consider the following 460-residue polypeptide: UDP-N-acetylmuramoylalanine--D-glutamate ligase (460 aa).

120–126 (GSNGKTT) serves as a coordination point for ATP.

The protein belongs to the MurCDEF family.

The protein resides in the cytoplasm. It catalyses the reaction UDP-N-acetyl-alpha-D-muramoyl-L-alanine + D-glutamate + ATP = UDP-N-acetyl-alpha-D-muramoyl-L-alanyl-D-glutamate + ADP + phosphate + H(+). The protein operates within cell wall biogenesis; peptidoglycan biosynthesis. Cell wall formation. Catalyzes the addition of glutamate to the nucleotide precursor UDP-N-acetylmuramoyl-L-alanine (UMA). In Lactobacillus delbrueckii subsp. bulgaricus (strain ATCC 11842 / DSM 20081 / BCRC 10696 / JCM 1002 / NBRC 13953 / NCIMB 11778 / NCTC 12712 / WDCM 00102 / Lb 14), this protein is UDP-N-acetylmuramoylalanine--D-glutamate ligase.